A 369-amino-acid chain; its full sequence is Type 2 DNA topoisomerase 6 subunit A (369 aa).

The Topo IIA-type catalytic domain maps to 10-146 (KPREIAKQKI…LGFIPEEDGS (137 aa)). Tyr103 acts as the O-(5'-phospho-DNA)-tyrosine intermediate in catalysis. Residues Glu197 and Asp249 each coordinate Mg(2+).

This sequence belongs to the TOP6A family. In terms of assembly, homodimer. Heterotetramer of two Top6A and two Top6B chains. Requires Mg(2+) as cofactor.

It catalyses the reaction ATP-dependent breakage, passage and rejoining of double-stranded DNA.. Relaxes both positive and negative superturns and exhibits a strong decatenase activity. The chain is Type 2 DNA topoisomerase 6 subunit A from Methanocaldococcus jannaschii (strain ATCC 43067 / DSM 2661 / JAL-1 / JCM 10045 / NBRC 100440) (Methanococcus jannaschii).